An 81-amino-acid polypeptide reads, in one-letter code: Sulfur carrier protein TusA (81 aa).

Residue Cys19 is the Cysteine persulfide intermediate of the active site.

It belongs to the sulfur carrier protein TusA family. In terms of assembly, interacts with IscS.

The protein localises to the cytoplasm. It functions in the pathway tRNA modification. Its function is as follows. Sulfur carrier protein involved in sulfur trafficking in the cell. Part of a sulfur-relay system required for 2-thiolation during synthesis of 2-thiouridine of the modified wobble base 5-methylaminomethyl-2-thiouridine (mnm(5)s(2)U) in tRNA. Interacts with IscS and stimulates its cysteine desulfurase activity. Accepts an activated sulfur from IscS, which is then transferred to TusD, and thus determines the direction of sulfur flow from IscS to 2-thiouridine formation. Also appears to be involved in sulfur transfer for the biosynthesis of molybdopterin. The polypeptide is Sulfur carrier protein TusA (Pectobacterium atrosepticum (strain SCRI 1043 / ATCC BAA-672) (Erwinia carotovora subsp. atroseptica)).